The following is a 117-amino-acid chain: Ribonuclease P protein component (117 aa).

This sequence belongs to the RnpA family. Consists of a catalytic RNA component (M1 or rnpB) and a protein subunit.

The catalysed reaction is Endonucleolytic cleavage of RNA, removing 5'-extranucleotides from tRNA precursor.. In terms of biological role, RNaseP catalyzes the removal of the 5'-leader sequence from pre-tRNA to produce the mature 5'-terminus. It can also cleave other RNA substrates such as 4.5S RNA. The protein component plays an auxiliary but essential role in vivo by binding to the 5'-leader sequence and broadening the substrate specificity of the ribozyme. The sequence is that of Ribonuclease P protein component from Nocardioides sp. (strain ATCC BAA-499 / JS614).